The following is a 360-amino-acid chain: Variable large protein 14 (360 aa).

The first 18 residues, 1–18 (MRKRISAIIMTLFMVLAS), serve as a signal peptide directing secretion. Cys19 is lipidated: N-palmitoyl cysteine. Cys19 carries S-diacylglycerol cysteine lipidation.

This sequence belongs to the variable large protein (Vlp) family. Beta subfamily.

The protein localises to the cell outer membrane. Its function is as follows. The Vlp and Vsp proteins are antigenically distinct proteins, only one vlp or vsp gene is transcriptionally active at any one time. Switching between these genes is a mechanism of host immune response evasion. The protein is Variable large protein 14 of Borrelia hermsii.